The chain runs to 123 residues: Large ribosomal subunit protein uL29 (123 aa).

Belongs to the universal ribosomal protein uL29 family.

The sequence is that of Large ribosomal subunit protein uL29 (RPL35) from Theileria parva (East coast fever infection agent).